A 732-amino-acid polypeptide reads, in one-letter code: Catalase-peroxidase (732 aa).

The segment at 1-29 (MTTESKCPFSGGGKPNTPRRGPSNQDWWP) is disordered. Positions 96 to 223 (WHSAGTYRIG…LAAVQMGLIY (128 aa)) form a cross-link, tryptophyl-tyrosyl-methioninium (Trp-Tyr) (with M-249). Residue His-97 is the Proton acceptor of the active site. The segment at residues 223–249 (YVNPEGPDGNPDPVAAARDIRETFARM) is a cross-link (tryptophyl-tyrosyl-methioninium (Tyr-Met) (with W-96)). Residue His-264 coordinates heme b.

It belongs to the peroxidase family. Peroxidase/catalase subfamily. In terms of assembly, homodimer or homotetramer. The cofactor is heme b. Formation of the three residue Trp-Tyr-Met cross-link is important for the catalase, but not the peroxidase activity of the enzyme.

It carries out the reaction H2O2 + AH2 = A + 2 H2O. The enzyme catalyses 2 H2O2 = O2 + 2 H2O. Its function is as follows. Bifunctional enzyme with both catalase and broad-spectrum peroxidase activity. This chain is Catalase-peroxidase, found in Serratia proteamaculans (strain 568).